We begin with the raw amino-acid sequence, 741 residues long: Catalase-peroxidase 2 (741 aa).

An N-terminal signal peptide occupies residues Met1–Ala28. Positions Trp107 to Tyr228 form a cross-link, tryptophyl-tyrosyl-methioninium (Trp-Tyr) (with M-254). The active-site Proton acceptor is His108. The segment at residues Tyr228 to Met254 is a cross-link (tryptophyl-tyrosyl-methioninium (Tyr-Met) (with W-107)). His269 is a binding site for heme b.

The protein belongs to the peroxidase family. Peroxidase/catalase subfamily. Homodimer or homotetramer. Heme b serves as cofactor. Formation of the three residue Trp-Tyr-Met cross-link is important for the catalase, but not the peroxidase activity of the enzyme.

It catalyses the reaction H2O2 + AH2 = A + 2 H2O. It carries out the reaction 2 H2O2 = O2 + 2 H2O. Its function is as follows. Bifunctional enzyme with both catalase and broad-spectrum peroxidase activity. This Burkholderia ambifaria (strain MC40-6) protein is Catalase-peroxidase 2.